The sequence spans 208 residues: Putative dioxygenase RBE_0329 (208 aa).

Belongs to the intradiol ring-cleavage dioxygenase family.

This Rickettsia bellii (strain RML369-C) protein is Putative dioxygenase RBE_0329.